A 197-amino-acid polypeptide reads, in one-letter code: uncharacterized protein (197 aa).

Positions 29–166 (DWSVHTVSLD…FTNLILEMID (138 aa)) constitute a PfpI endopeptidase domain. C98 acts as the Nucleophile in catalysis.

This sequence belongs to the peptidase C56 family.

This is an uncharacterized protein from Bacillus subtilis (strain 168).